The sequence spans 200 residues: GTP cyclohydrolase-2 (200 aa).

50 to 54 (RVHSE) serves as a coordination point for GTP. Zn(2+) is bound by residues C55, C66, and C68. GTP is bound by residues Q71, 93–95 (EGR), and T115. D127 (proton acceptor) is an active-site residue. R129 serves as the catalytic Nucleophile. Positions 150 and 155 each coordinate GTP.

Belongs to the GTP cyclohydrolase II family. Requires Zn(2+) as cofactor.

It carries out the reaction GTP + 4 H2O = 2,5-diamino-6-hydroxy-4-(5-phosphoribosylamino)-pyrimidine + formate + 2 phosphate + 3 H(+). It participates in cofactor biosynthesis; riboflavin biosynthesis; 5-amino-6-(D-ribitylamino)uracil from GTP: step 1/4. Catalyzes the conversion of GTP to 2,5-diamino-6-ribosylamino-4(3H)-pyrimidinone 5'-phosphate (DARP), formate and pyrophosphate. The chain is GTP cyclohydrolase-2 from Acinetobacter baumannii (strain AB307-0294).